Reading from the N-terminus, the 37-residue chain is Large ribosomal subunit protein bL36 (37 aa).

It belongs to the bacterial ribosomal protein bL36 family.

The sequence is that of Large ribosomal subunit protein bL36 from Acetivibrio thermocellus (strain ATCC 27405 / DSM 1237 / JCM 9322 / NBRC 103400 / NCIMB 10682 / NRRL B-4536 / VPI 7372) (Clostridium thermocellum).